Here is a 1280-residue protein sequence, read N- to C-terminus: Multidrug resistance protein 1 (1280 aa).

Over 1–72 the chain is Cytoplasmic; that stretch reads MSRAHAAYAN…YADATDRVLM (72 aa). Residues 72–357 enclose the ABC transmembrane type-1 1 domain; sequence MIAGTAFAVA…VAPSRTAFTE (286 aa). A run of 6 helical transmembrane segments spans residues 73–93, 120–140, 189–209, 216–236, 297–317, and 326–345; these read IAGTAFAVACGAGMPVFSFIF, YVGIAMLIACAGHVMCWTVAA, KLSQGIMNGSMGVIGYIAGFV, LMMIGMMPFIIVMAAIIGSIV, LSAAVIMALMYVSYTVAFFFG, and RDMADIISTFLAVLMGSFGL. Topologically, residues 346–712 are cytoplasmic; sequence GFVAPSRTAF…MRMNKDKAWA (367 aa). The 244-residue stretch at 391–634 folds into the ABC transporter 1 domain; that stretch reads IEFRNVRFAY…DGEFAAVAKM (244 aa). 426 to 433 provides a ligand contact to ATP; that stretch reads GASGCGKS. Transmembrane regions (helical) follow at residues 713–733, 762–781, 837–857, 858–878, 938–958, and 976–996; these read VALGILSSVVIGSARPASSIV, PLFIVFAVANFSGWILHGFY, IGLKVQTMCIIASGLVVGFIY, QWKLALVALACMPLMIGCSLT, IIAGGIYGITQFIFYGVYALC, and VMIASMSILFGAQNAGEAGAF. The region spanning 713 to 1002 is the ABC transmembrane type-1 2 domain; the sequence is VALGILSSVV…AGAFATKLAD (290 aa). Residues 1036-1274 enclose the ABC transporter 2 domain; sequence IEYRNVQFIY…GGEYKTRYDL (239 aa). Residue 1071–1078 coordinates ATP; it reads GQTGCGKS. Residue Asn1113 is glycosylated (N-linked (GlcNAc...) asparagine).

The protein belongs to the ABC transporter superfamily. ABCB family. Multidrug resistance exporter (TC 3.A.1.201) subfamily.

The protein resides in the membrane. It catalyses the reaction ATP + H2O + xenobioticSide 1 = ADP + phosphate + xenobioticSide 2.. Functionally, energy-dependent efflux pump responsible for decreased drug accumulation in multi-drug-resistant cells. Confers vinblastine resistance. In Leishmania enriettii, this protein is Multidrug resistance protein 1 (MDR1).